The primary structure comprises 361 residues: Probable dual-specificity RNA methyltransferase RlmN (361 aa).

Glu99 (proton acceptor) is an active-site residue. Positions 105-342 (GPNRMTACVS…VTIRKSYGTP (238 aa)) constitute a Radical SAM core domain. An intrachain disulfide couples Cys112 to Cys347. Positions 119, 123, and 126 each coordinate [4Fe-4S] cluster. S-adenosyl-L-methionine contacts are provided by residues 171–172 (GE), Ser204, 227–229 (SLH), and Asn304. Cys347 serves as the catalytic S-methylcysteine intermediate.

This sequence belongs to the radical SAM superfamily. RlmN family. [4Fe-4S] cluster serves as cofactor.

The protein localises to the cytoplasm. It catalyses the reaction adenosine(2503) in 23S rRNA + 2 reduced [2Fe-2S]-[ferredoxin] + 2 S-adenosyl-L-methionine = 2-methyladenosine(2503) in 23S rRNA + 5'-deoxyadenosine + L-methionine + 2 oxidized [2Fe-2S]-[ferredoxin] + S-adenosyl-L-homocysteine. It carries out the reaction adenosine(37) in tRNA + 2 reduced [2Fe-2S]-[ferredoxin] + 2 S-adenosyl-L-methionine = 2-methyladenosine(37) in tRNA + 5'-deoxyadenosine + L-methionine + 2 oxidized [2Fe-2S]-[ferredoxin] + S-adenosyl-L-homocysteine. Its function is as follows. Specifically methylates position 2 of adenine 2503 in 23S rRNA and position 2 of adenine 37 in tRNAs. The polypeptide is Probable dual-specificity RNA methyltransferase RlmN (Chlorobium luteolum (strain DSM 273 / BCRC 81028 / 2530) (Pelodictyon luteolum)).